Here is a 23-residue protein sequence, read N- to C-terminus: Unknown protein NF016 from 2D-PAGE (23 aa).

This is Unknown protein NF016 from 2D-PAGE from Naegleria fowleri (Brain eating amoeba).